A 251-amino-acid polypeptide reads, in one-letter code: Hydroxyacylglutathione hydrolase (251 aa).

H53, H55, D57, H58, H110, D127, and H165 together coordinate Zn(2+).

It belongs to the metallo-beta-lactamase superfamily. Glyoxalase II family. In terms of assembly, monomer. The cofactor is Zn(2+).

The catalysed reaction is an S-(2-hydroxyacyl)glutathione + H2O = a 2-hydroxy carboxylate + glutathione + H(+). Its pathway is secondary metabolite metabolism; methylglyoxal degradation; (R)-lactate from methylglyoxal: step 2/2. Thiolesterase that catalyzes the hydrolysis of S-D-lactoyl-glutathione to form glutathione and D-lactic acid. In Blochmanniella pennsylvanica (strain BPEN), this protein is Hydroxyacylglutathione hydrolase.